Reading from the N-terminus, the 1377-residue chain is DNA-directed RNA polymerase subunit beta' (1377 aa).

Zn(2+)-binding residues include C60, C62, C75, and C78. D449, D451, and D453 together coordinate Mg(2+). The Zn(2+) site is built by C777, C851, C858, and C861.

Belongs to the RNA polymerase beta' chain family. As to quaternary structure, the RNAP catalytic core consists of 2 alpha, 1 beta, 1 beta' and 1 omega subunit. When a sigma factor is associated with the core the holoenzyme is formed, which can initiate transcription. It depends on Mg(2+) as a cofactor. Zn(2+) is required as a cofactor.

The catalysed reaction is RNA(n) + a ribonucleoside 5'-triphosphate = RNA(n+1) + diphosphate. DNA-dependent RNA polymerase catalyzes the transcription of DNA into RNA using the four ribonucleoside triphosphates as substrates. This Borreliella afzelii (strain PKo) (Borrelia afzelii) protein is DNA-directed RNA polymerase subunit beta'.